A 359-amino-acid chain; its full sequence is Peptide chain release factor 1 (359 aa).

Q235 is subject to N5-methylglutamine. Residues 283-294 are compositionally biased toward basic and acidic residues; the sequence is SKADEERSESRK. The interval 283-309 is disordered; sequence SKADEERSESRKSQVGSGDRSERIRTY.

It belongs to the prokaryotic/mitochondrial release factor family. Post-translationally, methylated by PrmC. Methylation increases the termination efficiency of RF1.

It localises to the cytoplasm. Peptide chain release factor 1 directs the termination of translation in response to the peptide chain termination codons UAG and UAA. The polypeptide is Peptide chain release factor 1 (Mesorhizobium japonicum (strain LMG 29417 / CECT 9101 / MAFF 303099) (Mesorhizobium loti (strain MAFF 303099))).